The primary structure comprises 88 residues: Small ribosomal subunit protein uS15 (88 aa).

Belongs to the universal ribosomal protein uS15 family. As to quaternary structure, part of the 30S ribosomal subunit. Forms a bridge to the 50S subunit in the 70S ribosome, contacting the 23S rRNA.

Its function is as follows. One of the primary rRNA binding proteins, it binds directly to 16S rRNA where it helps nucleate assembly of the platform of the 30S subunit by binding and bridging several RNA helices of the 16S rRNA. Forms an intersubunit bridge (bridge B4) with the 23S rRNA of the 50S subunit in the ribosome. This Geobacter sp. (strain M21) protein is Small ribosomal subunit protein uS15.